The following is a 491-amino-acid chain: Protein nucleotidyltransferase YdiU (491 aa).

The ATP site is built by Gly92, Gly94, Arg95, Lys115, Asp127, Gly128, Arg178, and Arg185. Catalysis depends on Asp254, which acts as the Proton acceptor. Positions 255 and 264 each coordinate Mg(2+). Asp264 provides a ligand contact to ATP.

It belongs to the SELO family. Requires Mg(2+) as cofactor. It depends on Mn(2+) as a cofactor.

The catalysed reaction is L-seryl-[protein] + ATP = 3-O-(5'-adenylyl)-L-seryl-[protein] + diphosphate. It carries out the reaction L-threonyl-[protein] + ATP = 3-O-(5'-adenylyl)-L-threonyl-[protein] + diphosphate. The enzyme catalyses L-tyrosyl-[protein] + ATP = O-(5'-adenylyl)-L-tyrosyl-[protein] + diphosphate. It catalyses the reaction L-histidyl-[protein] + UTP = N(tele)-(5'-uridylyl)-L-histidyl-[protein] + diphosphate. The catalysed reaction is L-seryl-[protein] + UTP = O-(5'-uridylyl)-L-seryl-[protein] + diphosphate. It carries out the reaction L-tyrosyl-[protein] + UTP = O-(5'-uridylyl)-L-tyrosyl-[protein] + diphosphate. In terms of biological role, nucleotidyltransferase involved in the post-translational modification of proteins. It can catalyze the addition of adenosine monophosphate (AMP) or uridine monophosphate (UMP) to a protein, resulting in modifications known as AMPylation and UMPylation. The polypeptide is Protein nucleotidyltransferase YdiU (Mycolicibacterium paratuberculosis (strain ATCC BAA-968 / K-10) (Mycobacterium paratuberculosis)).